A 257-amino-acid chain; its full sequence is Phosphonates import ATP-binding protein PhnC (257 aa).

The ABC transporter domain maps to 7–251 (IQLKDVSKIY…VFTDIYNGGD (245 aa)). 40-47 (GLSGAGKS) is an ATP binding site.

This sequence belongs to the ABC transporter superfamily. Phosphonates importer (TC 3.A.1.9.1) family. As to quaternary structure, the complex is composed of two ATP-binding proteins (PhnC), two transmembrane proteins (PhnE) and a solute-binding protein (PhnD).

The protein resides in the cell membrane. The catalysed reaction is phosphonate(out) + ATP + H2O = phosphonate(in) + ADP + phosphate + H(+). Functionally, part of the ABC transporter complex PhnCDE involved in phosphonates import. Responsible for energy coupling to the transport system. The polypeptide is Phosphonates import ATP-binding protein PhnC (Lactobacillus acidophilus (strain ATCC 700396 / NCK56 / N2 / NCFM)).